Consider the following 558-residue polypeptide: CTP synthase (558 aa).

Residues 1–266 form an amidoligase domain region; that stretch reads MSAKYIFVTG…DRLVMKYLRL (266 aa). A CTP-binding site is contributed by Ser14. Ser14 serves as a coordination point for UTP. ATP is bound by residues 15–20 and Asp72; that span reads SLGKGL. Residues Asp72 and Glu140 each coordinate Mg(2+). Residues 147-149, 187-192, and Lys223 each bind CTP; these read DIE and KTKPTQ. UTP-binding positions include 187–192 and Lys223; that span reads KTKPTQ. Position 239–241 (239–241) interacts with ATP; that stretch reads KDV. The Glutamine amidotransferase type-1 domain maps to 291–537; that stretch reads IIGIIGKYVE…IGASYEHRMK (247 aa). Gly355 serves as a coordination point for L-glutamine. Catalysis depends on Cys382, which acts as the Nucleophile; for glutamine hydrolysis. Residues 383-386, Glu406, and Arg463 each bind L-glutamine; that span reads LGMQ. Active-site residues include His510 and Glu512. The tract at residues 539–558 is disordered; it reads THTKEREEESVFLRPERVGK. Basic and acidic residues predominate over residues 542–558; it reads KEREEESVFLRPERVGK.

It belongs to the CTP synthase family. In terms of assembly, homotetramer.

It carries out the reaction UTP + L-glutamine + ATP + H2O = CTP + L-glutamate + ADP + phosphate + 2 H(+). It catalyses the reaction L-glutamine + H2O = L-glutamate + NH4(+). The enzyme catalyses UTP + NH4(+) + ATP = CTP + ADP + phosphate + 2 H(+). It participates in pyrimidine metabolism; CTP biosynthesis via de novo pathway; CTP from UDP: step 2/2. Allosterically activated by GTP, when glutamine is the substrate; GTP has no effect on the reaction when ammonia is the substrate. The allosteric effector GTP functions by stabilizing the protein conformation that binds the tetrahedral intermediate(s) formed during glutamine hydrolysis. Inhibited by the product CTP, via allosteric rather than competitive inhibition. Functionally, catalyzes the ATP-dependent amination of UTP to CTP with either L-glutamine or ammonia as the source of nitrogen. Regulates intracellular CTP levels through interactions with the four ribonucleotide triphosphates. In Koribacter versatilis (strain Ellin345), this protein is CTP synthase.